The following is a 392-amino-acid chain: Formate-dependent phosphoribosylglycinamide formyltransferase (392 aa).

Residues glutamate 22–leucine 23 and glutamate 82 each bind N(1)-(5-phospho-beta-D-ribosyl)glycinamide. ATP-binding positions include arginine 114, lysine 155, serine 160–glutamine 165, glutamate 195–valine 198, and glutamate 203. Positions arginine 119–leucine 308 constitute an ATP-grasp domain. The Mg(2+) site is built by glutamate 267 and glutamate 279. Residues aspartate 286, lysine 355, and arginine 362–arginine 363 each bind N(1)-(5-phospho-beta-D-ribosyl)glycinamide.

This sequence belongs to the PurK/PurT family. Homodimer.

The catalysed reaction is N(1)-(5-phospho-beta-D-ribosyl)glycinamide + formate + ATP = N(2)-formyl-N(1)-(5-phospho-beta-D-ribosyl)glycinamide + ADP + phosphate + H(+). The protein operates within purine metabolism; IMP biosynthesis via de novo pathway; N(2)-formyl-N(1)-(5-phospho-D-ribosyl)glycinamide from N(1)-(5-phospho-D-ribosyl)glycinamide (formate route): step 1/1. Its function is as follows. Involved in the de novo purine biosynthesis. Catalyzes the transfer of formate to 5-phospho-ribosyl-glycinamide (GAR), producing 5-phospho-ribosyl-N-formylglycinamide (FGAR). Formate is provided by PurU via hydrolysis of 10-formyl-tetrahydrofolate. This is Formate-dependent phosphoribosylglycinamide formyltransferase from Salmonella dublin (strain CT_02021853).